The primary structure comprises 100 residues: C-X-C motif chemokine 3 (100 aa).

The signal sequence occupies residues Met1–Ala31. 2 disulfide bridges follow: Cys36-Cys62 and Cys38-Cys78.

Belongs to the intercrine alpha (chemokine CxC) family.

The protein resides in the secreted. Functionally, ligand for CXCR2. Has chemotactic activity for neutrophils. May play a role in inflammation and exert its effects on endothelial cells in an autocrine fashion. This Mus musculus (Mouse) protein is C-X-C motif chemokine 3.